A 524-amino-acid chain; its full sequence is Excitatory amino acid transporter 3 (524 aa).

Topologically, residues 1 to 18 are cytoplasmic; sequence MGKPARKGCEWKRFLKNN. A helical membrane pass occupies residues 19–38; it reads WVLLSTVAAVVLGITTGVLV. Residues 39-61 are Extracellular-facing; it reads REHSNLSTLEKFYFAFPGEILMR. A glycan (N-linked (GlcNAc...) asparagine) is linked at Asn-43. A helical membrane pass occupies residues 62-82; sequence MLKLIILPLIISSMITGVAAL. At 83 to 93 the chain is on the cytoplasmic side; that stretch reads DSNVSGKIGLR. The chain crosses the membrane as a helical span at residues 94–114; it reads AVVYYFCTTLIAVILGIVLVV. Residues Tyr-98, Thr-101, and Thr-102 each coordinate Na(+). Residues 115-205 lie on the Extracellular side of the membrane; sequence SIKPGVTQKV…KTKEYKIVGM (91 aa). N-linked (GlcNAc...) asparagine glycosylation is found at Asn-178 and Asn-195. A helical transmembrane segment spans residues 206-229; that stretch reads YSDGINVLGLIVFCLVFGLVIGKM. The Cytoplasmic segment spans residues 230-238; the sequence is GEKGQILVD. Residues 239–266 form a helical membrane-spanning segment; the sequence is FFNALSDATMKIVQIIMCYMPLGILFLI. Residues 267 to 286 are Extracellular-facing; the sequence is AGKIIEVEDWEIFRKLGLYM. The helical transmembrane segment at 287–308 threads the bilayer; that stretch reads ATVLTGLAIHSIVILPLIYFIV. The Cytoplasmic portion of the chain corresponds to 309–313; it reads VRKNP. The segment at residues 314–344 is an intramembrane region (discontinuously helical); the sequence is FRFAMGMAQALLTALMISSSSATLPVTFRCA. Residues Ser-331 and Ser-333 each coordinate L-aspartate. Residues 345 to 353 lie on the Cytoplasmic side of the membrane; sequence EENNQVDKR. The chain crosses the membrane as a helical span at residues 354–380; the sequence is ITRFVLPVGATINMDGTALYEAVAAVF. 4 residues coordinate Na(+): Gly-362, Thr-364, Asn-366, and Asp-368. L-aspartate is bound at residue Thr-370. The Extracellular portion of the chain corresponds to 381-393; it reads IAQLNDLDLGIGQ. Positions 394 to 427 form an intramembrane region, discontinuously helical; the sequence is IITISITATSASIGAAGVPQAGLVTMVIVLSAVG. The Na(+) site is built by Ser-405, Ile-406, and Ala-408. Position 411 (Val-411) interacts with L-aspartate. Residues 428–440 are Extracellular-facing; sequence LPAEDVTLIIAVD. A helical transmembrane segment spans residues 441–462; it reads WLLDRFRTMVNVLGDAFGTGIV. L-aspartate is bound by residues Arg-447, Thr-448, and Asn-451. Na(+) contacts are provided by Asn-451 and Asp-455. The Cytoplasmic portion of the chain corresponds to 463-524; the sequence is EKLSKKELEQ…TISFTQTSQF (62 aa). A phosphoserine mark is found at Ser-517 and Ser-522.

The protein belongs to the dicarboxylate/amino acid:cation symporter (DAACS) (TC 2.A.23) family. SLC1A1 subfamily. In terms of assembly, homotrimer. Interacts with ARL6IP5. Interacts with RTN2 (via N-terminus); the interaction promotes cell surface expression of SLC1A1. Interacts with SORCS2; this interaction is important for normal expression at the cell membrane. In terms of processing, glycosylated. As to expression, expressed in all tissues tested including liver, muscle, testis, ovary, retinoblastoma cell line, neurons and brain (in which there was dense expression in substantia nigra, red nucleus, hippocampus and in cerebral cortical layers).

It is found in the cell membrane. It localises to the apical cell membrane. The protein resides in the synapse. The protein localises to the synaptosome. Its subcellular location is the early endosome membrane. It is found in the late endosome membrane. It localises to the recycling endosome membrane. It carries out the reaction K(+)(in) + L-glutamate(out) + 3 Na(+)(out) + H(+)(out) = K(+)(out) + L-glutamate(in) + 3 Na(+)(in) + H(+)(in). It catalyses the reaction K(+)(in) + L-aspartate(out) + 3 Na(+)(out) + H(+)(out) = K(+)(out) + L-aspartate(in) + 3 Na(+)(in) + H(+)(in). The catalysed reaction is D-aspartate(out) + K(+)(in) + 3 Na(+)(out) + H(+)(out) = D-aspartate(in) + K(+)(out) + 3 Na(+)(in) + H(+)(in). The enzyme catalyses K(+)(in) + L-cysteine(out) + 3 Na(+)(out) + H(+)(out) = K(+)(out) + L-cysteine(in) + 3 Na(+)(in) + H(+)(in). Sodium-dependent, high-affinity amino acid transporter that mediates the uptake of L-glutamate and also L-aspartate and D-aspartate. Can also transport L-cysteine. Functions as a symporter that transports one amino acid molecule together with two or three Na(+) ions and one proton, in parallel with the counter-transport of one K(+) ion. Mediates Cl(-) flux that is not coupled to amino acid transport; this avoids the accumulation of negative charges due to aspartate and Na(+) symport. Plays an important role in L-glutamate and L-aspartate reabsorption in renal tubuli. Plays a redundant role in the rapid removal of released glutamate from the synaptic cleft, which is essential for terminating the postsynaptic action of glutamate. Contributes to glutathione biosynthesis and protection against oxidative stress via its role in L-glutamate and L-cysteine transport. Negatively regulated by ARL6IP5. This is Excitatory amino acid transporter 3 from Homo sapiens (Human).